The sequence spans 54 residues: Secreted virulence factor MC69 (54 aa).

An N-terminal signal peptide occupies residues 1 to 16 (MKAAFVLALCASLASA). The cysteines at positions 36 and 46 are disulfide-linked.

Belongs to the MC69 virulence factor family.

It localises to the secreted. Secreted protein required for appressorial penetration of intact host epidermal cells and for pathogenicity. In Pyricularia oryzae (strain 70-15 / ATCC MYA-4617 / FGSC 8958) (Rice blast fungus), this protein is Secreted virulence factor MC69.